Reading from the N-terminus, the 146-residue chain is Snake venom vascular endothelial growth factor toxin (146 aa).

Positions 1 to 24 are cleaved as a signal peptide; the sequence is MAAYLLAVAILFCIQGWPLGTVQG. Position 25 is a pyrrolidone carboxylic acid (glutamine 25). Intrachain disulfides connect cysteine 38-cysteine 80, cysteine 69-cysteine 115, and cysteine 73-cysteine 117. Positions 119 to 146 are disordered; the sequence is PRSASGVNSRKHKRNPEEGEPRAKFPFV. Residues 133–146 are compositionally biased toward basic and acidic residues; that stretch reads NPEEGEPRAKFPFV.

The protein belongs to the PDGF/VEGF growth factor family. Snake venom VEGF subfamily. As to quaternary structure, homodimer; disulfide-linked. Interacts with VEGF receptor-1 (FLT1) with a high affinity, whereas it binds to VEGF receptor-2 (KDR) with a low affinity. Does not bind VEGF receptor-3 (FLT4). As to expression, expressed by the venom gland.

Its subcellular location is the secreted. Its function is as follows. Snake venom VEGFs may contribute to venom dispersion and prey subjugation by inducing vascular permeability and hypotension. This protein induces vascular permeability probably through VEGF (VEGFR) signaling. This protein also induces a drastic hypotensive effect after intravenous injection. The hypotension is mediated by nitric oxide (NO), which is produced by VEGF-activated endothelium NO synthase. Also induces angiogenesis in vitro. Like other crotalid VEGFs, this protein interacts with VEGF receptor-1 (FLT1) with a high affinity, whereas it binds to VEGF receptor-2 (KDR) with a low affinity. The sequence is that of Snake venom vascular endothelial growth factor toxin from Bothrops insularis (Golden lancehead).